We begin with the raw amino-acid sequence, 388 residues long: Chalcone synthase D (388 aa).

Cys164 is an active-site residue.

The protein belongs to the thiolase-like superfamily. Chalcone/stilbene synthases family.

The enzyme catalyses (E)-4-coumaroyl-CoA + 3 malonyl-CoA + 3 H(+) = 2',4,4',6'-tetrahydroxychalcone + 3 CO2 + 4 CoA. The protein operates within secondary metabolite biosynthesis; flavonoid biosynthesis. Functionally, the primary product of this enzyme is 4,2',4',6'-tetrahydroxychalcone (also termed naringenin-chalcone or chalcone) which can under specific conditions spontaneously isomerize into naringenin. This chain is Chalcone synthase D (CHSD), found in Ipomoea nil (Japanese morning glory).